The sequence spans 637 residues: ATP-dependent rRNA helicase SPB4 (637 aa).

The Q motif signature appears at 10–38 (WENLRVDLEPWLKDAIRSLNYPTMTPVQA). One can recognise a Helicase ATP-binding domain in the interval 41 to 236 (IPLLSGNKDV…RTGMNNPVKL (196 aa)). 54-61 (AVTGSGKT) serves as a coordination point for ATP. Positions 184-187 (DEAD) match the DEAD box motif. The Helicase C-terminal domain maps to 266–444 (KLTTMLQMLR…KFQKKLRKYM (179 aa)). A coiled-coil region spans residues 528-597 (SAEKARLENL…QLEAEQERGG (70 aa)). Residues 554–637 (LKVKNEAWSS…GVLQGSFDDL (84 aa)) form a disordered region. Composition is skewed to basic and acidic residues over residues 564–576 (KTEKRETKLERKE) and 583–598 (EAIEKQLEAEQERGGL). The span at 621–630 (NGGGGGGGVL) shows a compositional bias: gly residues.

This sequence belongs to the DEAD box helicase family. DDX55/SPB4 subfamily. As to quaternary structure, component of pre-60S ribosomal complexes.

The protein resides in the nucleus. It localises to the nucleolus. The catalysed reaction is ATP + H2O = ADP + phosphate + H(+). ATP-binding RNA helicase involved in the biogenesis of 60S ribosomal subunits. Binds 90S pre-ribosomal particles and dissociates from pre-60S ribosomal particles after processing of 27SB pre-rRNA. Required for the normal formation of 18S rRNA through the processing of pre-rRNAs at sites A0, A1 and A2, and the normal formation of 25S and 5.8S rRNAs through the processing of pre-rRNAs at sites C1 and C2. The protein is ATP-dependent rRNA helicase SPB4 of Lodderomyces elongisporus (strain ATCC 11503 / CBS 2605 / JCM 1781 / NBRC 1676 / NRRL YB-4239) (Yeast).